The sequence spans 721 residues: Polyribonucleotide nucleotidyltransferase (721 aa).

Mg(2+) contacts are provided by Asp495 and Asp501. The 60-residue stretch at 562–621 folds into the KH domain; that stretch reads PRLLSFRIDPELIGTVIGPGGRTIKGITERTNTKIDIEDGGIVTIASHDGAAAEEAQKII. The 69-residue stretch at 631–699 folds into the S1 motif domain; the sequence is GEVFSGSITR…NRGRINLTLR (69 aa).

Belongs to the polyribonucleotide nucleotidyltransferase family. The cofactor is Mg(2+).

It is found in the cytoplasm. It catalyses the reaction RNA(n+1) + phosphate = RNA(n) + a ribonucleoside 5'-diphosphate. Functionally, involved in mRNA degradation. Catalyzes the phosphorolysis of single-stranded polyribonucleotides processively in the 3'- to 5'-direction. The chain is Polyribonucleotide nucleotidyltransferase from Synechococcus sp. (strain CC9605).